A 121-amino-acid chain; its full sequence is Large ribosomal subunit protein bL12 (121 aa).

The protein belongs to the bacterial ribosomal protein bL12 family. Homodimer. Part of the ribosomal stalk of the 50S ribosomal subunit. Forms a multimeric L10(L12)X complex, where L10 forms an elongated spine to which 2 to 4 L12 dimers bind in a sequential fashion. Binds GTP-bound translation factors.

Its function is as follows. Forms part of the ribosomal stalk which helps the ribosome interact with GTP-bound translation factors. Is thus essential for accurate translation. The protein is Large ribosomal subunit protein bL12 of Anoxybacillus flavithermus (strain DSM 21510 / WK1).